The primary structure comprises 122 residues: UPF0102 protein MUL_2060 (122 aa).

The protein belongs to the UPF0102 family.

This Mycobacterium ulcerans (strain Agy99) protein is UPF0102 protein MUL_2060.